The following is a 72-amino-acid chain: High-potential iron-sulfur protein isozyme 1 (72 aa).

The [4Fe-4S] cluster site is built by Cys-34, Cys-37, Cys-51, and Cys-65.

The protein belongs to the high-potential iron-sulfur protein (HiPIP) family. In terms of assembly, homodimer.

Its function is as follows. Specific class of high-redox-potential 4Fe-4S ferredoxins. Functions in anaerobic electron transport in most purple and in some other photosynthetic bacteria and in at least one genus (Paracoccus) of halophilic, denitrifying bacteria. The chain is High-potential iron-sulfur protein isozyme 1 (hip1) from Ectothiorhodospira shaposhnikovii (Ectothiorhodospira vacuolata).